The primary structure comprises 326 residues: MSQFVVCALYKFVSLPAFEALQQPLLKEMESLEIKGTLLLASEGINGTVAGSQAGIDSLLAWLDAQPGLDNIVYKLSFDDEMPFYRTKVKLKKEIVTMGVEGIDPRKVVGTYVKPKDWNKLISDPEVLLIDTRNDYEVNIGTFKNAVDPKTQTFREFPDYVKQNLDPKQHKKVAMFCTGGIRCEKSTAYLKEQGFDEVYHLEGGVLKYLEEVKPEESLWEGECFVFDNRVSVNHQLEKGQYDQCNACRLPITEEDKQSEHYVQGVSCPHCIDKLSDKQRKRFVERERQVQLAKSRGESHIGSDVKQVIEARRQDKVERKQRQHQEG.

The Rhodanese domain occupies 123–217; it reads SDPEVLLIDT…YLEEVKPEES (95 aa). Catalysis depends on Cys-177, which acts as the Cysteine persulfide intermediate. Residues 293-326 form a disordered region; the sequence is KSRGESHIGSDVKQVIEARRQDKVERKQRQHQEG.

This sequence belongs to the TrhO family.

It carries out the reaction uridine(34) in tRNA + AH2 + O2 = 5-hydroxyuridine(34) in tRNA + A + H2O. Catalyzes oxygen-dependent 5-hydroxyuridine (ho5U) modification at position 34 in tRNAs. The chain is tRNA uridine(34) hydroxylase from Shewanella loihica (strain ATCC BAA-1088 / PV-4).